The chain runs to 9518 residues: Nonribosomal peptide synthetase ungA' (9518 aa).

Residues 214–611 (ERARETPNAP…ARKDDQVKVR (398 aa)) form an adenylation 1 region. The region spanning 738-814 (APRTEMEWRL…DLAEVARLEQ (77 aa)) is the Carrier 1 domain. S775 carries the O-(pantetheine 4'-phosphoryl)serine modification. The interval 853 to 1250 (DLLPCSPLQE…EEVLRQISRE (398 aa)) is condensation 1. The interval 1292–1695 (QRVQEQPDRP…GRKDTQVKIR (404 aa)) is adenylation 2. The 77-residue stretch at 1822–1898 (LPQTELERRL…RLAHCSQTEQ (77 aa)) folds into the Carrier 2 domain. Residue S1859 is modified to O-(pantetheine 4'-phosphoryl)serine. The interval 1911–2336 (TFALSPIQQL…QRSLEVVAKE (426 aa)) is epimerization 1. The condensation 2 stretch occupies residues 2376 to 2803 (EDIYPCSPVQ…DNLQIASSQD (428 aa)). An adenylation 3 region spans residues 2829–3224 (RIQQQPEAPA…NRKDNQVKIR (396 aa)). In terms of domain architecture, Carrier 3 spans 3352 to 3428 (APATASEQRL…DMAQTLKVES (77 aa)). At S3389 the chain carries O-(pantetheine 4'-phosphoryl)serine. The interval 3465 to 3869 (EDVLPCTPLQ…QVCKEASQYL (405 aa)) is condensation 3. Residues 3906–4307 (QQAHQRPNAS…GRRDAQVKIR (402 aa)) form an adenylation 4 region. Residues 4436 to 4512 (TPTTITECRI…RLAACTTPVD (77 aa)) form the Carrier 4 domain. S4473 carries the O-(pantetheine 4'-phosphoryl)serine modification. Residues 4527–4954 (ALSPIQQLFV…EDAAQELPSL (428 aa)) form an epimerization 2 region. Positions 4990-5411 (VEDIYPCSPI…ANLISKEDLR (422 aa)) are condensation 4. Positions 5433–5829 (SEQAQNQPDA…GRKDGQVKIR (397 aa)) are adenylation 5. Residues 5957 to 6033 (VASSPVELAL…QLAKNSGLQA (77 aa)) form the Carrier 5 domain. S5994 is modified (O-(pantetheine 4'-phosphoryl)serine). The segment at 6050–6470 (ELSPIQRMFF…CEHSLVMAAH (421 aa)) is epimerization 3. The condensation 5 stretch occupies residues 6512–6856 (VEDIYPCTPI…TGISVQNNAS (345 aa)). The interval 6947–7338 (LRPNSSAIHA…GRKDSQVKVR (392 aa)) is adenylation 6. The Carrier 6 domain maps to 7464-7540 (LPRTEVEMQL…GLAPSAASQA (77 aa)). At S7501 the chain carries O-(pantetheine 4'-phosphoryl)serine. Residues 7555 to 7978 (ELSPIQQMFI…LQTAARELPH (424 aa)) are epimerization 4. Residues 8016-8444 (VEDIYPLTPI…QVDLAGRHDQ (429 aa)) are condensation 6. Residues 8468 to 8867 (MQCQQRPDAT…SRKDAQVKIR (400 aa)) are adenylation 7. The Carrier 7 domain maps to 8995-9071 (PLTTEMEWRL…DMAHYLREGQ (77 aa)). An O-(pantetheine 4'-phosphoryl)serine modification is found at S9032. The interval 9111–9454 (DVYPTTELQD…DNLEHDAGTS (344 aa)) is condensation 7.

The protein belongs to the NRP synthetase family.

Its pathway is secondary metabolite biosynthesis. Functionally, nonribosomal peptide synthetase; part of the gene cluster that mediates the biosynthesis of the unguisins, gamma-aminobutyric acid (GABA)-containing fungal cyclic heptapeptides with the amino acid sequence cyclo-(D-Ala1-D-Val2-L-Leu3-beta-MePhe4-D-Ala5-D-Trp6-GABA7) for unguisin H and cyclo-(D-Ala1-D-Ala2-L-Leu3-beta-MePhe4-D-Ala5-D-Trp6-GABA7) for unguisin I. UngA' is the main enzyme within the cluster which condenses the 7 residues using its respective 7 modules. The terminal condensation domain (Ct) is involved in cyclization with D-alanine and thereby releasing of unguisins H and I. The alanine racemase ungC' provides D-alanine, which is then accepted by the first adenylation domain of ungA', whereas the methyltransferase ungE' provides the (2R,3R)-beta-methylphenylalanine residue incorporated by the module 4. Finally, the hydrolase ungD' catalyzes the hydrolysis between the D-tryptophan and GABA residues of unguisins H and I to produce the corresponding linear peptides. The chain is Nonribosomal peptide synthetase ungA' from Aspergillus campestris (strain IBT 28561).